Reading from the N-terminus, the 262-residue chain is Serine/arginine-rich SC35-like splicing factor SCL30A (262 aa).

Disordered stretches follow at residues 1 to 38 and 115 to 262; these read MRGR…LPTS and ENRK…SPSQ. Phosphoserine is present on residues Ser9 and Ser20. Positions 37–115 constitute an RRM domain; the sequence is TSLLVRNLRH…RELTVVFAEE (79 aa). Over residues 115–140 the composition is skewed to basic and acidic residues; that stretch reads ENRKKPTEMRTRDRGGRSNRFQDRRR. Residues 150 to 161 are compositionally biased toward basic residues; the sequence is PPRRGRRSRSRS. A phosphoserine mark is found at Ser166, Ser174, Ser176, and Ser178. Basic and acidic residues predominate over residues 180–190; the sequence is QDRRYEKERSY. Ser191 and Ser193 each carry phosphoserine. Basic residues predominate over residues 209-226; it reads VKSHSRSPRRSVSPRKNR. A compositionally biased stretch (low complexity) spans 234–246; sequence RSQSPVPRQSRSP. Phosphoserine occurs at positions 235, 259, and 261.

The protein belongs to the splicing factor SR family. SCL subfamily. Component of the spliceosome. Interacts with SNRNP35, CYP59 and RS2Z33.

The protein resides in the nucleus speckle. Functionally, involved in intron recognition and spliceosome assembly. Binds probably to multiple 5'-GAAG-3' repeats found in its third intron, suggesting autoregulation of alternative splicing. May be necessary for accurate splicing of the 3' region of introns. The protein is Serine/arginine-rich SC35-like splicing factor SCL30A (SCL30A) of Arabidopsis thaliana (Mouse-ear cress).